The sequence spans 303 residues: MAASILQAENIELRKRLNAVCEYVDMEAKCETAAGKIFYKHCYQTAKNGGTGTGLICMNPDMLHAMELFDEELSLKDNWTNFKNILIKINIGQVITIHGQAIPVNPNHYRNGEGYYLTLVAPKKTEAIDDAVPLLDTEQLYRFIMCYHEIKMDLIDWIERSASLSGLQVKLDSANHALNMAEYVMDTIADPTNEDIVLQCISEVNEMDNAKFGHFLGKLNDLLDSPELKPNSCSDIARKQLRYFYRVDKDSAVNYIADNYFNLDISFKEFLDNFMLKTFYPELNCKNIMFYPIGAKKIVFCMK.

This is an uncharacterized protein from Magallana gigas (Pacific oyster).